The chain runs to 152 residues: Small ribosomal subunit protein uS13 (152 aa).

Position 2 is an N-acetylserine (Ser2). Residue Lys91 forms a Glycyl lysine isopeptide (Lys-Gly) (interchain with G-Cter in SUMO2) linkage. 2 positions are modified to N6-acetyllysine; alternate: Lys94 and Lys106. Residues Lys94 and Lys106 each participate in a glycyl lysine isopeptide (Lys-Gly) (interchain with G-Cter in SUMO2); alternate cross-link.

The protein belongs to the universal ribosomal protein uS13 family. In terms of assembly, component of the small ribosomal subunit.

The protein localises to the cytoplasm. Its function is as follows. Component of the small ribosomal subunit. The ribosome is a large ribonucleoprotein complex responsible for the synthesis of proteins in the cell. The chain is Small ribosomal subunit protein uS13 (RPS18) from Homo sapiens (Human).